Here is a 478-residue protein sequence, read N- to C-terminus: Mannose-1-phosphate guanylyltransferase (478 aa).

This sequence belongs to the mannose-6-phosphate isomerase type 2 family.

The catalysed reaction is alpha-D-mannose 1-phosphate + GTP + H(+) = GDP-alpha-D-mannose + diphosphate. Its pathway is nucleotide-sugar biosynthesis; GDP-alpha-D-mannose biosynthesis; GDP-alpha-D-mannose from alpha-D-mannose 1-phosphate (GTP route): step 1/1. Involved in the biosynthesis of the capsular polysaccharide colanic acid. The chain is Mannose-1-phosphate guanylyltransferase (manC) from Escherichia coli (strain K12).